An 897-amino-acid polypeptide reads, in one-letter code: Interleukin enhancer-binding factor 3 (897 aa).

In terms of domain architecture, DZF spans 5-378 (RIFVNDDRHV…PMKRPMEEDG (374 aa)). A disordered region spans residues 52 to 85 (QEKGNSELSEAENMDTPPDDESKEGAGEQKAEHM). The span at 60–73 (SEAENMDTPPDDES) shows a compositional bias: acidic residues. Thr67 carries the post-translational modification Phosphothreonine. Residues 74–85 (KEGAGEQKAEHM) show a composition bias toward basic and acidic residues. Lys100 is modified (N6-acetyllysine). Thr188 carries the post-translational modification Phosphothreonine; by PKR. Ser190 is subject to Phosphoserine. Lys297 is covalently cross-linked (Glycyl lysine isopeptide (Lys-Gly) (interchain with G-Cter in ubiquitin)). The residue at position 315 (Thr315) is a Phosphothreonine; by PKR. A Glycyl lysine isopeptide (Lys-Gly) (interchain with G-Cter in SUMO1) cross-link involves residue Lys348. The disordered stretch occupies residues 363–401 (TTYAITPMKRPMEEDGEEKSPSKKKKKIQKKEEKAEPPQ). A Bipartite nuclear localization signal motif is present at residues 371 to 389 (KRPMEEDGEEKSPSKKKKK). Positions 372 to 383 (RPMEEDGEEKSP) are enriched in basic and acidic residues. Phosphoserine is present on residues Ser382 and Ser384. Residue Lys396 forms a Glycyl lysine isopeptide (Lys-Gly) (interchain with G-Cter in SUMO2) linkage. The DRBM 1 domain occupies 398 to 467 (EPPQAMNALM…AVKVLQDMGL (70 aa)). At Lys460 the chain carries N6-acetyllysine. Disordered regions lie at residues 466-524 (GLPT…LTKH), 624-662 (GMGG…GTNH), and 720-897 (GDSY…YQYR). Positions 472–481 (EGRDSSKGED) are enriched in basic and acidic residues. Residues Ser476, Ser477, Ser482, and Ser486 each carry the phosphoserine modification. Residue Lys489 forms a Glycyl lysine isopeptide (Lys-Gly) (interchain with G-Cter in SUMO2) linkage. Over residues 499–508 (VEAVSNPSSV) the composition is skewed to low complexity. Residues 524–590 (HGKNPVMELN…ALAALEKLFP (67 aa)) enclose the DRBM 2 domain. The interval 609-897 (RGGPKFAAKP…TEHSMNYQYR (289 aa)) is interaction with PRMT1. Residues 644-662 (RGGNIRGRGRGRGFGGTNH) show a composition bias toward gly residues. 3 stretches are compositionally biased toward low complexity: residues 745 to 769 (SYSS…SSYG), 783 to 794 (GSYSSYSNSYNS), and 802 to 812 (DYSYDSKFNYS). Residues Ser794, Ser812, Ser814, and Ser818 each carry the phosphoserine modification. A compositionally biased stretch (gly residues) spans 813-822 (GSGGRSGGNS). Residues 823–833 (YGSSGSSYNTG) show a composition bias toward low complexity. Gly residues predominate over residues 834 to 844 (SHGGYGAGSGG). Positions 845–885 (SSSYQGKQGGYSSQSNYSSPGSSQSYSGPASSYQSSQGGYS) are enriched in low complexity.

As to quaternary structure, identified in a IGF2BP1-dependent mRNP granule complex containing untranslated mRNAs. Interacts with FUS and SMN. Interacts (via C-terminus) with PRMT1. Forms a complex with ILF2. Can also bind to PRKDC/XRCC7: this may stabilize the interaction of PRKDC/XRCC7 and the heterodimeric complex of XRCC6/KU70 and XRCC5/KU80. Forms a heteromeric complex with ZNF346 and ILF3. Found in a nuclear export complex with XPO5, ILF3, Ran and double-stranded RNA or double-stranded minihelix VA1 RNA. Found in a nuclear export complex with XPO5, RAN, ILF3, ZNF346 and double-stranded RNA. Interacts with XPO5 and ZNF346. Forms a complex with ILF2, YLPM1, KHDRBS1, RBMX, NCOA5 and PPP1CA. Interacts with AGO1 and AGO2. Interacts with DHX36; this interaction occurs in a RNA-dependent manner. Interacts with ELAVL1; this interaction occurs in a RNA-dependent manner. Interacts with HAVCR2; this interaction promotes ILF3 ubiquitination and subsequent degradation. In terms of processing, phosphorylated at Thr-188 and Thr-315 by PKR in response to RNA viruses. This phosphorylation results in the dissociation of ILF2 from the ILF2-ILF3 complex resulting in a cytoplasmic sequestration of ILF3 where it can bind to viral RNAs and impede viral replication. Post-translationally, methylated by protein arginine N-methyltransferase 1.

It localises to the nucleus. The protein resides in the nucleolus. The protein localises to the cytoplasm. Functionally, RNA-binding protein that plays an essential role in the biogenesis of circular RNAs (circRNAs) which are produced by back-splicing circularization of pre-mRNAs. Within the nucleus, promotes circRNAs processing by stabilizing the regulatory elements residing in the flanking introns of the circularized exons. Plays thereby a role in the back-splicing of a subset of circRNAs. As a consequence, participates in a wide range of transcriptional and post-transcriptional processes. Binds to poly-U elements and AU-rich elements (AREs) in the 3'-UTR of target mRNAs. Upon viral infection, ILF3 accumulates in the cytoplasm and participates in the innate antiviral response. Mechanistically, ILF3 becomes phosphorylated and activated by the double-stranded RNA-activated protein kinase/PKR which releases ILF3 from cellular mature circRNAs. In turn, unbound ILF3 molecules are able to interact with and thus inhibit viral mRNAs. The protein is Interleukin enhancer-binding factor 3 (Ilf3) of Rattus norvegicus (Rat).